The following is a 316-amino-acid chain: Epoxide hydrolase 2 (316 aa).

Residues 25–302 (PAVLFLHGFP…AAHFINQERP (278 aa)) enclose the AB hydrolase-1 domain. Asp101 serves as the catalytic Nucleophile. Residue Tyr150 coordinates an epoxide. Tyr230 serves as the catalytic Proton donor. His295 serves as the catalytic Proton acceptor.

The protein belongs to the AB hydrolase superfamily. Epoxide hydrolase family. Homodimer. In terms of tissue distribution, highly expressed in young fruits 15 days after anthesis (15-DAA). Also observed in stems and leaves.

It catalyses the reaction an epoxide + H2O = an ethanediol. The catalysed reaction is (24S)-24,25-epoxycucurbitadienol + H2O = (24R)-24,25-dihydroxycucurbitadienol. Its pathway is secondary metabolite biosynthesis; terpenoid biosynthesis. Its function is as follows. Epoxide hydrolase involved in the biosynthesis of cucurbitacin and mogroside tetracyclic triterpene natural products (e.g. siamenoside I and mogrosides IV, V and VI). Cucurbitacins have cytotoxic properties and exhibit deterrent taste as a defense barrier against herbivores. Mogrosides are nonsugar highly oxygenated compounds used as high-intensity zero-calorie sweeteners; they also possess pharmacological properties such as regulating immunity, lowering blood sugar and lipid levels, protecting the liver, and acting as antioxidants and antitumor agents. Catalyzes the hydrolysis of aromatic epoxide-containing substrates, such as the conversion of 24,25-epoxycucurbitadienol to 24,25-dihydroxycucurbitadienol. In Siraitia grosvenorii (Monk's fruit), this protein is Epoxide hydrolase 2.